A 342-amino-acid polypeptide reads, in one-letter code: S-adenosylmethionine:tRNA ribosyltransferase-isomerase (342 aa).

Belongs to the QueA family. In terms of assembly, monomer.

It is found in the cytoplasm. It catalyses the reaction 7-aminomethyl-7-carbaguanosine(34) in tRNA + S-adenosyl-L-methionine = epoxyqueuosine(34) in tRNA + adenine + L-methionine + 2 H(+). The protein operates within tRNA modification; tRNA-queuosine biosynthesis. Transfers and isomerizes the ribose moiety from AdoMet to the 7-aminomethyl group of 7-deazaguanine (preQ1-tRNA) to give epoxyqueuosine (oQ-tRNA). The protein is S-adenosylmethionine:tRNA ribosyltransferase-isomerase of Streptococcus pneumoniae (strain ATCC BAA-255 / R6).